A 523-amino-acid polypeptide reads, in one-letter code: Aldehyde oxidase GLOX (523 aa).

Residues 1-19 (MILDAAIVALADLPGTWEL) form the signal peptide.

It localises to the secreted. It is found in the cell wall. It catalyses the reaction an aldehyde + O2 + H2O = a carboxylate + H2O2 + H(+). Functionally, catalyzes the oxidation of aldehydes to the corresponding carboxylate by coupling the reaction to the reduction of dioxygen to hydrogen peroxide. Substrates include glyoxal and other aldehydes. Involved in disease resistance against the grapevine powdery mildew E.necator. Is sufficient to confer disease resistance to E.necator. Can produce hydrogen peroxide in response to E.necator infection, and this may directly play a role in the defense mechanism during plant-pathogen interactions. The polypeptide is Aldehyde oxidase GLOX (Vitis pseudoreticulata (Chinese wild grapevine)).